A 66-amino-acid polypeptide reads, in one-letter code: Large ribosomal subunit protein bL32 (66 aa).

The protein belongs to the bacterial ribosomal protein bL32 family.

The sequence is that of Large ribosomal subunit protein bL32 from Rickettsia conorii (strain ATCC VR-613 / Malish 7).